We begin with the raw amino-acid sequence, 930 residues long: Isoleucine--tRNA ligase (930 aa).

The 'HIGH' region motif lies at 57 to 67 (PYANGNIHVGH). Position 554 (Glu-554) interacts with L-isoleucyl-5'-AMP. Positions 595 to 599 (KMSKS) match the 'KMSKS' region motif. Position 598 (Lys-598) interacts with ATP. Residues Cys-888, Cys-891, Cys-908, and Cys-911 each contribute to the Zn(2+) site.

It belongs to the class-I aminoacyl-tRNA synthetase family. IleS type 1 subfamily. As to quaternary structure, monomer. The cofactor is Zn(2+).

It localises to the cytoplasm. It carries out the reaction tRNA(Ile) + L-isoleucine + ATP = L-isoleucyl-tRNA(Ile) + AMP + diphosphate. Functionally, catalyzes the attachment of isoleucine to tRNA(Ile). As IleRS can inadvertently accommodate and process structurally similar amino acids such as valine, to avoid such errors it has two additional distinct tRNA(Ile)-dependent editing activities. One activity is designated as 'pretransfer' editing and involves the hydrolysis of activated Val-AMP. The other activity is designated 'posttransfer' editing and involves deacylation of mischarged Val-tRNA(Ile). This Streptococcus pneumoniae (strain ATCC 700669 / Spain 23F-1) protein is Isoleucine--tRNA ligase.